The sequence spans 552 residues: Phosphoribosylaminoimidazole carboxylase (552 aa).

Residues 108-295 enclose the ATP-grasp domain; it reads KQHLQVFKIA…QFEAHLRAIC (188 aa). 134-189 is a binding site for ATP; that stretch reads GQEFGYPFVLKSKTLAYDGRGNYVVHQPSEIPTAIKALGDRPLYVEKFVPFSMEIA.

This sequence in the C-terminal section; belongs to the AIR carboxylase family. Class I subfamily.

It catalyses the reaction 5-amino-1-(5-phospho-D-ribosyl)imidazole-4-carboxylate + H(+) = 5-amino-1-(5-phospho-beta-D-ribosyl)imidazole + CO2. The protein operates within purine metabolism; IMP biosynthesis via de novo pathway; 5-amino-1-(5-phospho-D-ribosyl)imidazole-4-carboxylate from 5-amino-1-(5-phospho-D-ribosyl)imidazole (carboxylase route): step 1/1. In Schizosaccharomyces pombe (strain 972 / ATCC 24843) (Fission yeast), this protein is Phosphoribosylaminoimidazole carboxylase (ade6).